We begin with the raw amino-acid sequence, 146 residues long: Ribosome maturation factor RimP (146 aa).

Belongs to the RimP family.

Its subcellular location is the cytoplasm. Required for maturation of 30S ribosomal subunits. This chain is Ribosome maturation factor RimP, found in Helicobacter pylori (strain ATCC 700392 / 26695) (Campylobacter pylori).